Here is a 292-residue protein sequence, read N- to C-terminus: RNA 5'-monophosphate methyltransferase (292 aa).

The disordered stretch occupies residues M1 to S21. S-adenosyl-L-methionine is bound by residues R46, N76, D110, D135–F136, and M164. The Bin3-type SAM domain maps to E53 to P274.

Belongs to the methyltransferase superfamily. In terms of assembly, interacts with DICER1; the interaction may be mediated by RNA.

The protein resides in the cytoplasm. It carries out the reaction a 5'-end 5'-phospho-ribonucleoside-RNA + S-adenosyl-L-methionine = a 5'-end (5'-methylphospho)-ribonucleoside-RNA + S-adenosyl-L-homocysteine. The catalysed reaction is a 5'-end 5'-phospho-ribonucleoside-RNA + 2 S-adenosyl-L-methionine = a 5'-end (5'-bismethylphospho)-ribonucleoside-RNA + 2 S-adenosyl-L-homocysteine. Functionally, O-methyltransferase that specifically monomethylates 5'-monophosphate of cytoplasmic histidyl tRNA (tRNA(His)), acting as a capping enzyme by protecting tRNA(His) from cleavage by DICER1. Also able, with less efficiently, to methylate the 5' monophosphate of a subset of pre-miRNAs, acting as a negative regulator of miRNA processing. The 5' monophosphate of pre-miRNAs is recognized by DICER1 and is required for pre-miRNAs processing: methylation at this position reduces the processing of pre-miRNAs by DICER1. Was also reported to mediate dimethylation of pre-miR-145; however dimethylation cannot be reproduced by another group which observes a monomethylation of pre-miR-145. The polypeptide is RNA 5'-monophosphate methyltransferase (Homo sapiens (Human)).